We begin with the raw amino-acid sequence, 310 residues long: Tagatose-6-phosphate kinase (310 aa).

Belongs to the carbohydrate kinase PfkB family. LacC subfamily.

It carries out the reaction D-tagatofuranose 6-phosphate + ATP = D-tagatofuranose 1,6-bisphosphate + ADP + H(+). It functions in the pathway carbohydrate metabolism; D-tagatose 6-phosphate degradation; D-glyceraldehyde 3-phosphate and glycerone phosphate from D-tagatose 6-phosphate: step 1/2. This Staphylococcus epidermidis (strain ATCC 12228 / FDA PCI 1200) protein is Tagatose-6-phosphate kinase.